The chain runs to 350 residues: Probable L-aspartate decarboxylase (350 aa).

Lysine 206 carries the post-translational modification N6-(pyridoxal phosphate)lysine.

The protein belongs to the group II decarboxylase family. MfnA subfamily. It depends on pyridoxal 5'-phosphate as a cofactor.

The enzyme catalyses L-aspartate + H(+) = beta-alanine + CO2. It participates in cofactor biosynthesis; coenzyme A biosynthesis. Catalyzes the decarboxylation of L-aspartate to produce beta-alanine. In Haloarcula marismortui (strain ATCC 43049 / DSM 3752 / JCM 8966 / VKM B-1809) (Halobacterium marismortui), this protein is Probable L-aspartate decarboxylase.